Here is a 440-residue protein sequence, read N- to C-terminus: Protein naked cuticle homolog 1 (440 aa).

Residue G2 is the site of N-myristoyl glycine attachment. In terms of domain architecture, EF-hand spans 129-164; that stretch reads EEDNRQEWTFTLYDFDNNGKVTREDITSLLHTIYEV. D142, D144, N146, K148, and D153 together coordinate Ca(2+). The span at 192–204 shows a compositional bias: polar residues; that stretch reads RWKNCTQTNTDTP. Disordered stretches follow at residues 192–221, 272–379, and 421–440; these read RWKNCTQTNTDTPNPKHKGEKCIEDSKTSE, AAPA…QRPK, and RHEHHHHHEHHHHYHHFYQS. A compositionally biased stretch (basic and acidic residues) spans 211-221; the sequence is EKCIEDSKTSE. Low complexity predominate over residues 272–293; that stretch reads AAPATEPAKPTHATRSSNQSRS. A compositionally biased stretch (basic residues) spans 324–336; that stretch reads RHTHALRSPKTHR. A compositionally biased stretch (pro residues) spans 352–362; that stretch reads APPPPSVPNQT. A compositionally biased stretch (basic residues) spans 422–440; the sequence is HEHHHHHEHHHHYHHFYQS.

It belongs to the NKD family.

The protein localises to the cell membrane. It localises to the cytoplasm. Its function is as follows. Cell autonomous antagonist of the canonical Wnt signaling pathway. May activate a second Wnt signaling pathway that controls planar cell polarity. The protein is Protein naked cuticle homolog 1 (nkd1) of Danio rerio (Zebrafish).